Consider the following 216-residue polypeptide: Imidazole glycerol phosphate synthase subunit HisH (216 aa).

The Glutamine amidotransferase type-1 domain occupies 2-216; that stretch reads RVAIIDYGSG…LIANFLKWKP (215 aa). The active-site Nucleophile is C88. Catalysis depends on residues H196 and E198.

In terms of assembly, heterodimer of HisH and HisF.

Its subcellular location is the cytoplasm. The catalysed reaction is 5-[(5-phospho-1-deoxy-D-ribulos-1-ylimino)methylamino]-1-(5-phospho-beta-D-ribosyl)imidazole-4-carboxamide + L-glutamine = D-erythro-1-(imidazol-4-yl)glycerol 3-phosphate + 5-amino-1-(5-phospho-beta-D-ribosyl)imidazole-4-carboxamide + L-glutamate + H(+). It catalyses the reaction L-glutamine + H2O = L-glutamate + NH4(+). Its pathway is amino-acid biosynthesis; L-histidine biosynthesis; L-histidine from 5-phospho-alpha-D-ribose 1-diphosphate: step 5/9. Its function is as follows. IGPS catalyzes the conversion of PRFAR and glutamine to IGP, AICAR and glutamate. The HisH subunit catalyzes the hydrolysis of glutamine to glutamate and ammonia as part of the synthesis of IGP and AICAR. The resulting ammonia molecule is channeled to the active site of HisF. The polypeptide is Imidazole glycerol phosphate synthase subunit HisH (Brucella abortus biovar 1 (strain 9-941)).